Here is a 156-residue protein sequence, read N- to C-terminus: Small ribosomal subunit protein uS7 (156 aa).

The protein belongs to the universal ribosomal protein uS7 family. As to quaternary structure, part of the 30S ribosomal subunit. Contacts proteins S9 and S11.

Functionally, one of the primary rRNA binding proteins, it binds directly to 16S rRNA where it nucleates assembly of the head domain of the 30S subunit. Is located at the subunit interface close to the decoding center, probably blocks exit of the E-site tRNA. This chain is Small ribosomal subunit protein uS7, found in Chromobacterium violaceum (strain ATCC 12472 / DSM 30191 / JCM 1249 / CCUG 213 / NBRC 12614 / NCIMB 9131 / NCTC 9757 / MK).